We begin with the raw amino-acid sequence, 504 residues long: Maturase K (504 aa).

This sequence belongs to the intron maturase 2 family. MatK subfamily.

It localises to the plastid. It is found in the chloroplast. Functionally, usually encoded in the trnK tRNA gene intron. Probably assists in splicing its own and other chloroplast group II introns. This Taxus baccata (English yew) protein is Maturase K.